The following is a 352-amino-acid chain: Histidine biosynthesis bifunctional protein HisB (352 aa).

A histidinol-phosphatase region spans residues 1–164; sequence MSQKILFIDR…EIENEILSSF (164 aa). D9 (nucleophile) is an active-site residue. The Mg(2+) site is built by D9 and D11. The Proton donor role is filled by D11. Residues C93, H95, C101, and C103 each contribute to the Zn(2+) site. D130 is a binding site for Mg(2+). An imidazoleglycerol-phosphate dehydratase region spans residues 165 to 352; the sequence is RSASYQRTTK…ENLASSKGVI (188 aa).

It in the N-terminal section; belongs to the histidinol-phosphatase family. The protein in the C-terminal section; belongs to the imidazoleglycerol-phosphate dehydratase family. The cofactor is Mg(2+). Zn(2+) serves as cofactor.

The protein resides in the cytoplasm. It carries out the reaction D-erythro-1-(imidazol-4-yl)glycerol 3-phosphate = 3-(imidazol-4-yl)-2-oxopropyl phosphate + H2O. It catalyses the reaction L-histidinol phosphate + H2O = L-histidinol + phosphate. The protein operates within amino-acid biosynthesis; L-histidine biosynthesis; L-histidine from 5-phospho-alpha-D-ribose 1-diphosphate: step 6/9. It functions in the pathway amino-acid biosynthesis; L-histidine biosynthesis; L-histidine from 5-phospho-alpha-D-ribose 1-diphosphate: step 8/9. The chain is Histidine biosynthesis bifunctional protein HisB from Campylobacter jejuni subsp. jejuni serotype O:23/36 (strain 81-176).